Reading from the N-terminus, the 137-residue chain is 3-hydroxyacyl-[acyl-carrier-protein] dehydratase FabZ (137 aa).

His46 is an active-site residue.

The protein belongs to the thioester dehydratase family. FabZ subfamily.

The protein localises to the cytoplasm. The catalysed reaction is a (3R)-hydroxyacyl-[ACP] = a (2E)-enoyl-[ACP] + H2O. Its function is as follows. Involved in unsaturated fatty acids biosynthesis. Catalyzes the dehydration of short chain beta-hydroxyacyl-ACPs and long chain saturated and unsaturated beta-hydroxyacyl-ACPs. The protein is 3-hydroxyacyl-[acyl-carrier-protein] dehydratase FabZ of Thermotoga maritima (strain ATCC 43589 / DSM 3109 / JCM 10099 / NBRC 100826 / MSB8).